A 202-amino-acid chain; its full sequence is Pycsar effector protein PtPycTM (202 aa).

The next 3 membrane-spanning stretches (helical) occupy residues 60–80, 85–105, and 181–201; these read GVVL…AADI, LVIL…AVLA, and ILVG…VALG.

It is found in the cell membrane. Its function is as follows. Pycsar (pyrimidine cyclase system for antiphage resistance) provides immunity against bacteriophage. The pyrimidine cyclase (PycC) synthesizes cyclic nucleotides in response to infection; these serve as specific second messenger signals. The signals activate the adjacent effector, leading to bacterial cell death and abortive phage infection. A clade D Pycsar system. The effector gene of a two-gene Pycsar system. Expression of this and adjacent uridylate cyclase PtPycC (AC A0A4V2JTK3) probably confers resistance to bacteriophage. The genes are probably only expressed in response to bacteriophage infection. Probably only responds to cUMP (produced by its cognate NTP cyclase), acts by impairing membrane integrity. The protein is Pycsar effector protein PtPycTM of Propioniciclava tarda.